The chain runs to 76 residues: Sec-independent protein translocase protein TatA (76 aa).

A helical membrane pass occupies residues methionine 1–glycine 21. Residues lysine 40 to alanine 76 are disordered. Basic and acidic residues predominate over residues asparagine 64–alanine 76.

Belongs to the TatA/E family. In terms of assembly, the Tat system comprises two distinct complexes: a TatABC complex, containing multiple copies of TatA, TatB and TatC subunits, and a separate TatA complex, containing only TatA subunits. Substrates initially bind to the TatABC complex, which probably triggers association of the separate TatA complex to form the active translocon.

The protein localises to the cell inner membrane. Functionally, part of the twin-arginine translocation (Tat) system that transports large folded proteins containing a characteristic twin-arginine motif in their signal peptide across membranes. TatA could form the protein-conducting channel of the Tat system. This Burkholderia cenocepacia (strain HI2424) protein is Sec-independent protein translocase protein TatA.